The chain runs to 318 residues: Rhomboid-related protein 4 (318 aa).

At 1–21 the chain is on the cytoplasmic side; it reads MQRRSRGINTGLILLLSQIFH. The helical transmembrane segment at 22 to 42 threads the bilayer; that stretch reads VGINNIPPVTLATLALNIWFF. Residues 43 to 106 lie on the Extracellular side of the membrane; that stretch reads LNPQKPLYSS…RRLGSRWFAY (64 aa). Residues 107–127 traverse the membrane as a helical segment; sequence VITTFSVLTGVVYLLLQFAVA. Residues 128–137 lie on the Cytoplasmic side of the membrane; sequence EFMDEPDFKR. A helical transmembrane segment spans residues 138–154; it reads SCAVGFSGVLFALKVLN. Serine 144 functions as the Nucleophile in the catalytic mechanism. Over 155–179 the chain is Extracellular; the sequence is NHYCPGGFVNILGFPVPNRFACWVE. A helical transmembrane segment spans residues 180 to 204; it reads LVAIHLFSPGTSFAGHQAGILVGLM. The active site involves histidine 195. Over 205–318 the chain is Cytoplasmic; it reads YTQGPLKKIM…RQRLHRFDSQ (114 aa). The ubiquitin-binding domain (UBD) stretch occupies residues 271 to 286; sequence SEEEQLERALQASLWD. Residues 285 to 318 are disordered; it reads WDRGHTRNSPPPYGFHLSPEEEMRRQRLHRFDSQ. Positions 302–318 are enriched in basic and acidic residues; the sequence is SPEEEMRRQRLHRFDSQ. Positions 303-318 are VCP/p97-interacting motif (VIM); sequence PEEEMRRQRLHRFDSQ.

Belongs to the peptidase S54 family. In terms of assembly, interacts with BIK and STEAP3. Interacts (via C-terminal domain) with VCP. Interacts with ubiquitin and ubiquitinated proteins.

The protein localises to the endoplasmic reticulum membrane. Its subcellular location is the mitochondrion membrane. The enzyme catalyses Cleaves type-1 transmembrane domains using a catalytic dyad composed of serine and histidine that are contributed by different transmembrane domains.. Its activity is regulated as follows. Inhibited by aprotinin. Its function is as follows. Intramembrane-cleaving serine protease that cleaves single transmembrane or multi-pass membrane proteins in the hydrophobic plane of the membrane, luminal loops and juxtamembrane regions. Involved in regulated intramembrane proteolysis and the subsequent release of functional polypeptides from their membrane anchors. Functional component of endoplasmic reticulum-associated degradation (ERAD) for misfolded membrane proteins. Required for the degradation process of some specific misfolded endoplasmic reticulum (ER) luminal proteins. Participates in the transfer of misfolded proteins from the ER to the cytosol, where they are destroyed by the proteasome in a ubiquitin-dependent manner. Functions in BIK, MPZ, PKD1, PTCRA, RHO, STEAP3 and TRAC processing. Involved in the regulation of exosomal secretion; inhibits the TSAP6-mediated secretion pathway. Involved in the regulation of apoptosis; modulates BIK-mediated apoptotic activity. Also plays a role in the regulation of spermatogenesis; inhibits apoptotic activity in spermatogonia. The protein is Rhomboid-related protein 4 (RHBDD1) of Pongo abelii (Sumatran orangutan).